We begin with the raw amino-acid sequence, 493 residues long: ATP-dependent rRNA helicase RRP3 (493 aa).

Composition is skewed to basic and acidic residues over residues 26-42 (ALENQKKMQAASRKDSE) and 51-62 (ERPAKKQAKDEK). The disordered stretch occupies residues 26-68 (ALENQKKMQAASRKDSESDSSDEEVERPAKKQAKDEKVEEPEE). The short motif at 73-101 (ESFAQLNLVPELIQACQNLNFTKPTPIQA) is the Q motif element. Positions 104-276 (IPPALAGSDV…RASLTNPVKC (173 aa)) constitute a Helicase ATP-binding domain. 117–124 (AQTGSGKT) lines the ATP pocket. Positions 223–226 (DEAD) match the DEAD box motif. A Helicase C-terminal domain is found at 307-453 (LLNEFIGKTV…NIILTLRDSV (147 aa)). The tract at residues 467–493 (RNKEKQARGKGRRGRMMAKENMDREEK) is disordered. A compositionally biased stretch (basic and acidic residues) spans 483 to 493 (MAKENMDREEK).

This sequence belongs to the DEAD box helicase family. DDX47/RRP3 subfamily. As to quaternary structure, interacts with the SSU processome.

The protein resides in the nucleus. It carries out the reaction ATP + H2O = ADP + phosphate + H(+). Functionally, ATP-dependent rRNA helicase required for pre-ribosomal RNA processing. Involved in the maturation of the 35S-pre-rRNA and to its cleavage to mature 18S rRNA. The chain is ATP-dependent rRNA helicase RRP3 from Candida glabrata (strain ATCC 2001 / BCRC 20586 / JCM 3761 / NBRC 0622 / NRRL Y-65 / CBS 138) (Yeast).